Consider the following 184-residue polypeptide: UPF0398 protein BALH_1408 (184 aa).

This sequence belongs to the UPF0398 family.

This Bacillus thuringiensis (strain Al Hakam) protein is UPF0398 protein BALH_1408.